Consider the following 1153-residue polypeptide: MSLRFIYGRAGSGKSQFCIESINTRIEKGGDKPLILIVPEQFSFQSEKNILDLIGEKSINRVKVISFKRLAYRIFDEVGGIAREHMNSSGKSMLFYHIMNTLKSEFRVFALSARQKGFVNTIADTVSEFKKYELTTEVLRDTIDEIEDEELKNKLHDLSLIYDEFNRLLYKNYIDPDDDLTILKDKIKQSTVLQGAEIWLDEFSSFIPQQYGIIEELLKKCSRVNITLTMDYDNASKDNDIFSVTQNTEKRLLKLAENNNISIEKPINLNGRPFYRFKNSPELSFLEKNLYSFPYEIYKKGPDKIEIFKTSNLYTEVEKIARNIIEFVREDNVRFSDIAVVTGDLGSYEKTVSVIFKEYRIPFFIDRNKDIEDNTLIILIKSIIDIFVKNWSYETVFRYLKTGFADIEPDEIDILENYVLAAGIKGKKKWTEEEWTYNVYGDALEGDISEESKEKLSKVNEIKNRFLRPILNFRERVLRRNNVAEICRALFEFLYDINVPEAVEKMVNEFRESGRQILANEYSQIWNIIIELMDQLVEVMGNEKVNLEQFSRILFIGIKEHKMGLIPSSLDQVLVGSIDRLKSHAIKILYIIGVNDGVFPSAAMEEGILSDRDREILNSKGVELAKDTKTQAMEQRFLVYTAITNSKEYLFLSYPIADYEGKTLRPSLIVNRVKTLFPKIVEKSDVIKIENDEESMKLISATVPTFNEMISSFRKEIDGEGEVSSIWHDVYRWYSKSDEWTGKCNNMFKAISYTNQVDYISEEKALKLYGGSLKMSVSRLEKYIECPFSYYVQYGLNIKDRKIFSLTPPDLGSFMHKVIDRFCETIKEENIDWNEVNDHICEEKIYKIVDQEIEGRGGSILNSSPRYSYIALRLKRILKRTVRIVAEQFKRGSFKPVGYEVSFENGGSYPPITVGLNDGSEVVLTGRIDRIDMMEKDGSTYIRIVDYKSGNKIFKLSDVYYGFDIQLLLYLNAILENENLDEEDKVLPGAILYFTMDDPIIKGKNNLTDEQIREEIMKSLKMKGLLLSDPDVIKEMDREMEGSSIIIPASIKKDGTLGRSSAATKEQFDILIEHVRNLVVKNCENLLMGDIRIKPYKKGKEKPCDYCMYSSICRFDTMFDGNNYRYVKEKSDEEVWKLIEREMSEEGDERGED.

8 to 15 (GRAGSGKS) is an ATP binding site. The [4Fe-4S] cluster site is built by Cys-786, Cys-1104, Cys-1107, and Cys-1113.

Belongs to the helicase family. AddB/RexB type 1 subfamily. As to quaternary structure, heterodimer of AddA and AddB. Requires Mg(2+) as cofactor. It depends on [4Fe-4S] cluster as a cofactor.

Its function is as follows. The heterodimer acts as both an ATP-dependent DNA helicase and an ATP-dependent, dual-direction single-stranded exonuclease. Recognizes the chi site generating a DNA molecule suitable for the initiation of homologous recombination. The AddB subunit has 5' -&gt; 3' nuclease activity but not helicase activity. This Clostridium acetobutylicum (strain ATCC 824 / DSM 792 / JCM 1419 / IAM 19013 / LMG 5710 / NBRC 13948 / NRRL B-527 / VKM B-1787 / 2291 / W) protein is ATP-dependent helicase/deoxyribonuclease subunit B.